Reading from the N-terminus, the 138-residue chain is Large ribosomal subunit protein uL16 (138 aa).

Residues Met-1–Gly-19 are compositionally biased toward basic residues. The segment at Met-1 to Gly-24 is disordered.

It belongs to the universal ribosomal protein uL16 family. Part of the 50S ribosomal subunit.

Its function is as follows. Binds 23S rRNA and is also seen to make contacts with the A and possibly P site tRNAs. This Mycobacteroides abscessus (strain ATCC 19977 / DSM 44196 / CCUG 20993 / CIP 104536 / JCM 13569 / NCTC 13031 / TMC 1543 / L948) (Mycobacterium abscessus) protein is Large ribosomal subunit protein uL16.